Reading from the N-terminus, the 431-residue chain is Cytochrome c oxidase subunit 3 (431 aa).

Transmembrane regions (helical) follow at residues 70-90 (IAPL…FGVI), 96-116 (FVIA…SIVF), 132-152 (LVMG…SFFW), 176-196 (VYSY…SGAI), 321-341 (LYFT…EYYF), 356-376 (FLLT…IGII), and 408-428 (LFYW…IYWW).

Belongs to the cytochrome c oxidase subunit 3 family. Component of the cytochrome c oxidase (complex IV, CIV), a multisubunit enzyme composed of a catalytic core of 3 subunits and several supernumerary subunits. The complex exists as a monomer or a dimer and forms supercomplexes (SCs) in the inner mitochondrial membrane with ubiquinol-cytochrome c oxidoreductase (cytochrome b-c1 complex, complex III, CIII).

It localises to the mitochondrion inner membrane. The enzyme catalyses 4 Fe(II)-[cytochrome c] + O2 + 8 H(+)(in) = 4 Fe(III)-[cytochrome c] + 2 H2O + 4 H(+)(out). Its function is as follows. Component of the cytochrome c oxidase, the last enzyme in the mitochondrial electron transport chain which drives oxidative phosphorylation. The respiratory chain contains 3 multisubunit complexes succinate dehydrogenase (complex II, CII), ubiquinol-cytochrome c oxidoreductase (cytochrome b-c1 complex, complex III, CIII) and cytochrome c oxidase (complex IV, CIV), that cooperate to transfer electrons derived from NADH and succinate to molecular oxygen, creating an electrochemical gradient over the inner membrane that drives transmembrane transport and the ATP synthase. Cytochrome c oxidase is the component of the respiratory chain that catalyzes the reduction of oxygen to water. Electrons originating from reduced cytochrome c in the intermembrane space (IMS) are transferred via the dinuclear copper A center (CU(A)) of subunit 2 and heme A of subunit 1 to the active site in subunit 1, a binuclear center (BNC) formed by heme A3 and copper B (CU(B)). The BNC reduces molecular oxygen to 2 water molecules using 4 electrons from cytochrome c in the IMS and 4 protons from the mitochondrial matrix. This Dictyostelium citrinum (Slime mold) protein is Cytochrome c oxidase subunit 3 (cox3).